A 520-amino-acid chain; its full sequence is Erythritol kinase (520 aa).

Belongs to the FGGY kinase family.

It carries out the reaction erythritol + ATP = D-erythritol 1-phosphate + ADP + H(+). The protein operates within carbohydrate metabolism; erythritol degradation. In terms of biological role, catalyzes the phosphorylation of erythritol to D-erythritol-1-phosphate. This chain is Erythritol kinase, found in Brucella abortus (strain 2308).